The chain runs to 574 residues: Proline--tRNA ligase (574 aa).

The protein belongs to the class-II aminoacyl-tRNA synthetase family. ProS type 1 subfamily. Homodimer.

It localises to the cytoplasm. The catalysed reaction is tRNA(Pro) + L-proline + ATP = L-prolyl-tRNA(Pro) + AMP + diphosphate. Its function is as follows. Catalyzes the attachment of proline to tRNA(Pro) in a two-step reaction: proline is first activated by ATP to form Pro-AMP and then transferred to the acceptor end of tRNA(Pro). As ProRS can inadvertently accommodate and process non-cognate amino acids such as alanine and cysteine, to avoid such errors it has two additional distinct editing activities against alanine. One activity is designated as 'pretransfer' editing and involves the tRNA(Pro)-independent hydrolysis of activated Ala-AMP. The other activity is designated 'posttransfer' editing and involves deacylation of mischarged Ala-tRNA(Pro). The misacylated Cys-tRNA(Pro) is not edited by ProRS. The chain is Proline--tRNA ligase from Buchnera aphidicola subsp. Baizongia pistaciae (strain Bp).